The primary structure comprises 247 residues: Small ribosomal subunit protein uS2 (247 aa).

This sequence belongs to the universal ribosomal protein uS2 family.

The chain is Small ribosomal subunit protein uS2 from Pseudomonas syringae pv. tomato (strain ATCC BAA-871 / DC3000).